The sequence spans 352 residues: Thymidine kinase (352 aa).

26–33 contacts ATP; sequence GSMGIGKT. The active-site Proton acceptor is E54. Q95 contributes to the substrate binding site. R185 serves as a coordination point for ATP. R191 serves as a coordination point for substrate.

The protein belongs to the herpesviridae thymidine kinase family. In terms of assembly, homodimer.

It catalyses the reaction thymidine + ATP = dTMP + ADP + H(+). Catalyzes the transfer of the gamma-phospho group of ATP to thymidine to generate dTMP in the salvage pathway of pyrimidine synthesis. The dTMP serves as a substrate for DNA polymerase during viral DNA replication. Allows the virus to be reactivated and to grow in non-proliferative cells lacking a high concentration of phosphorylated nucleic acid precursors. The polypeptide is Thymidine kinase (Gallus gallus (Chicken)).